We begin with the raw amino-acid sequence, 400 residues long: Acetate kinase (400 aa).

N10 provides a ligand contact to Mg(2+). K17 contributes to the ATP binding site. R91 is a substrate binding site. D148 serves as the catalytic Proton donor/acceptor. ATP contacts are provided by residues 208 to 212 (HLGNG), 283 to 285 (DCR), and 331 to 335 (GIGEN). E385 contacts Mg(2+).

The protein belongs to the acetokinase family. Homodimer. It depends on Mg(2+) as a cofactor. The cofactor is Mn(2+).

It localises to the cytoplasm. The catalysed reaction is acetate + ATP = acetyl phosphate + ADP. It participates in metabolic intermediate biosynthesis; acetyl-CoA biosynthesis; acetyl-CoA from acetate: step 1/2. Functionally, catalyzes the formation of acetyl phosphate from acetate and ATP. Can also catalyze the reverse reaction. This chain is Acetate kinase, found in Shewanella putrefaciens (strain CN-32 / ATCC BAA-453).